A 1102-amino-acid chain; its full sequence is Putative ISWI chromatin-remodeling complex subunit YPL216W (1102 aa).

The 109-residue stretch at 23–131 folds into the WAC domain; that stretch reads ETPWVIKESS…DTVCLKTIQK (109 aa). Residues 271–301 are disordered; sequence ELYTPLTIPPESDVEPADWKETSETSETSET. Residues 375 to 435 enclose the DDT domain; it reads QFPTERLLVV…FLKTYNSKGS (61 aa). The stretch at 673 to 743 forms a coiled coil; it reads CNGIRLKLDS…EDIAFLEAKL (71 aa).

It is found in the nucleus. Functionally, may be required for the activity of an ISWI chromatin-remodeling complex. This Saccharomyces cerevisiae (strain ATCC 204508 / S288c) (Baker's yeast) protein is Putative ISWI chromatin-remodeling complex subunit YPL216W.